Consider the following 150-residue polypeptide: UPF0178 protein BamMC406_1579 (150 aa).

This sequence belongs to the UPF0178 family.

This chain is UPF0178 protein BamMC406_1579, found in Burkholderia ambifaria (strain MC40-6).